A 361-amino-acid chain; its full sequence is MAGNTIGQLFRVTTFGESHGLALGCIVDGVPPGILLTEADLQHDLDRRRPGTSRYTTQRREPDQVKILSGVFEGVTTGTSIGLLIENTDQRSQDYSAIKDVFRPGHADYTYEQKYGLRDYRGGGRSSARETAMRVAAGAIAKKYLAEKFGIEIRGCLTQMGDIPLEIKDWSLVEQNPFFCPDPDKIDALDELMRALKKEGDSIGAKVTVVASGVPAGLGEPVFDRLDADIAHALMSINAVKGVEIGDGFDVVALRGSQNRDEITKDGFQSNHAGGILGGISSGQQIIAHMALKPTSSITVPGRTINRFGEEVEMITKGRHDPCVGIRAVPIAEAMLAIVLMDHLLRQRAQNADVKTDIPRW.

NADP(+) is bound by residues R48 and R54. Residues 125 to 127 (RSS), 238 to 239 (NA), G278, 293 to 297 (KPTSS), and R319 each bind FMN.

It belongs to the chorismate synthase family. In terms of assembly, homotetramer. It depends on FMNH2 as a cofactor.

The enzyme catalyses 5-O-(1-carboxyvinyl)-3-phosphoshikimate = chorismate + phosphate. Its pathway is metabolic intermediate biosynthesis; chorismate biosynthesis; chorismate from D-erythrose 4-phosphate and phosphoenolpyruvate: step 7/7. Its function is as follows. Catalyzes the anti-1,4-elimination of the C-3 phosphate and the C-6 proR hydrogen from 5-enolpyruvylshikimate-3-phosphate (EPSP) to yield chorismate, which is the branch point compound that serves as the starting substrate for the three terminal pathways of aromatic amino acid biosynthesis. This reaction introduces a second double bond into the aromatic ring system. The polypeptide is Chorismate synthase (Shigella boydii serotype 18 (strain CDC 3083-94 / BS512)).